We begin with the raw amino-acid sequence, 111 residues long: V-type proton ATPase subunit G 2 (111 aa).

The protein belongs to the V-ATPase G subunit family. V-ATPase is a heteromultimeric enzyme composed of a peripheral catalytic V1 complex (components A to H) attached to an integral membrane V0 proton pore complex (components: a, c, c', c'' and d).

In terms of biological role, catalytic subunit of the peripheral V1 complex of vacuolar ATPase (V-ATPase). V-ATPase is responsible for acidifying a variety of intracellular compartments in eukaryotic cells. In Nicotiana tabacum (Common tobacco), this protein is V-type proton ATPase subunit G 2 (VATG2).